The following is a 494-amino-acid chain: MGTTKVTPYLIFATSVAAIGSFQFGYNTGVINAPEMIIRDFLNYTLDEKLDEPPSRLLLTNLWSLSVAIFSVGGMIGSFSVGLFNRFGRRNSMLIVNLLAVIGGCLMGFCKISESVEMLILGRLVIGVFCGLCTGFVPMYIGEISPTALRGAFGTLNQLGIVIGILVAQIFGLEIILGSEVLWPVLLGFTIIPAILQSAALPFCPESPRFLLINKKEEDEAKQILQRLWGTQDVAQDIQEMKEESARMAQEKQVTVLELFRAPSYRQPIIISIVLQLSQQLSGINAVFYYSTGIFKDAGVKEPIYATIGAGVVNTIFTIVSVFLVERAGRRTLHLIGLGGMALCSVLMTVSLLLKDKYDTMSLVCIAAILIYVAFFEIGPGPIPWFIVAELFSQGPRPAAMAVAGCSNWTSNFLVGLLFPSAAYYLGAYVFVIFAVFLVAFFIFTFFKVPETRGRTFEDITRAFEGQAAEANKLGKGPTMEMNSIQPIETTTHV.

Topologically, residues 1–10 (MGTTKVTPYL) are cytoplasmic. A helical membrane pass occupies residues 11 to 32 (IFATSVAAIGSFQFGYNTGVIN). Topologically, residues 33–64 (APEMIIRDFLNYTLDEKLDEPPSRLLLTNLWS) are extracellular. Asparagine 43 carries N-linked (GlcNAc...) asparagine glycosylation. A helical transmembrane segment spans residues 65–84 (LSVAIFSVGGMIGSFSVGLF). The Cytoplasmic portion of the chain corresponds to 85–89 (NRFGR). The chain crosses the membrane as a helical span at residues 90-110 (RNSMLIVNLLAVIGGCLMGFC). The Extracellular segment spans residues 111–117 (KISESVE). The chain crosses the membrane as a helical span at residues 118–141 (MLILGRLVIGVFCGLCTGFVPMYI). Topologically, residues 142–152 (GEISPTALRGA) are cytoplasmic. A helical membrane pass occupies residues 153–173 (FGTLNQLGIVIGILVAQIFGL). A D-glucose-binding site is contributed by glutamine 158. At 174 to 182 (EIILGSEVL) the chain is on the extracellular side. A helical membrane pass occupies residues 183-203 (WPVLLGFTIIPAILQSAALPF). The Cytoplasmic segment spans residues 204–268 (CPESPRFLLI…LFRAPSYRQP (65 aa)). Threonine 231 carries the phosphothreonine modification. A helical membrane pass occupies residues 269–289 (IIISIVLQLSQQLSGINAVFY). The segment at 276–278 (QLS) is important for selectivity against fructose. Residues 279–280 (QQ) and asparagine 285 each bind D-glucose. The Extracellular segment spans residues 290–303 (YSTGIFKDAGVKEP). The chain crosses the membrane as a helical span at residues 304 to 324 (IYATIGAGVVNTIFTIVSVFL). Asparagine 314 contacts D-glucose. The Cytoplasmic portion of the chain corresponds to 325–330 (VERAGR). The chain crosses the membrane as a helical span at residues 331–351 (RTLHLIGLGGMALCSVLMTVS). Residues 352-362 (LLLKDKYDTMS) lie on the Extracellular side of the membrane. Residues 363 to 388 (LVCIAAILIYVAFFEIGPGPIPWFIV) traverse the membrane as a helical segment. Glutamate 377 and tryptophan 385 together coordinate D-glucose. Topologically, residues 389-398 (AELFSQGPRP) are cytoplasmic. A helical transmembrane segment spans residues 399 to 419 (AAMAVAGCSNWTSNFLVGLLF). Residues 420–428 (PSAAYYLGA) are Extracellular-facing. The chain crosses the membrane as a helical span at residues 429-449 (YVFVIFAVFLVAFFIFTFFKV). Topologically, residues 450 to 494 (PETRGRTFEDITRAFEGQAAEANKLGKGPTMEMNSIQPIETTTHV) are cytoplasmic. Serine 484 carries the phosphoserine modification. Threonine 491 carries the post-translational modification Phosphothreonine.

It belongs to the major facilitator superfamily. Sugar transporter (TC 2.A.1.1) family. Glucose transporter subfamily. Interacts with SMIM43; the interaction may promote SLC2A3-mediated glucose transport to meet the energy needs of mesendoderm differentiation. Detected in stomach, placenta, lung and brain.

The protein resides in the cell membrane. It is found in the perikaryon. It localises to the cell projection. It carries out the reaction D-glucose(out) = D-glucose(in). The catalysed reaction is D-galactose(in) = D-galactose(out). Deoxyglucose transport is inhibited by D-glucose, D-galactose and maltose. Galactose transport is inhibited by D-glucose and maltose. In terms of biological role, facilitative glucose transporter. Can also mediate the uptake of various other monosaccharides across the cell membrane. Mediates the uptake of glucose, 2-deoxyglucose, galactose, mannose, xylose and fucose, and probably also dehydroascorbate. Does not mediate fructose transport. Required for mesendoderm differentiation. The sequence is that of Solute carrier family 2, facilitated glucose transporter member 3 from Oryctolagus cuniculus (Rabbit).